Here is a 36-residue protein sequence, read N- to C-terminus: TGTSCISPKQCTEPCRAKGCKHGKCMNRKCHCMLCL.

4 cysteine pairs are disulfide-bonded: C5–C25, C11–C30, C15–C32, and C20–C35.

In terms of tissue distribution, expressed by the venom gland.

The protein resides in the secreted. In terms of biological role, blocks Shaker B channels expressed in Sf9 cells, with a dissociation constant of 52 nM. This Hoffmannihadrurus gertschi (Scorpion) protein is Potassium channel toxin alpha-KTx 6.14.